We begin with the raw amino-acid sequence, 287 residues long: Putative sugar uptake protein M6_Spy1874 (287 aa).

10 helical membrane passes run 4–26 (IFYA…KIGG), 33–50 (LGMT…WLIV), 55–72 (TLQL…WSIG), 85–107 (VSVA…GVLV), 117–134 (FVVG…FYFS), 154–171 (FRAL…AVLF), 181–200 (SVIL…FMSF), 207–229 (YVIK…LLAA), 234–256 (LAIA…ILFL), and 268–285 (VVTG…LGVV).

The protein belongs to the GRP transporter (TC 2.A.7.5) family.

It localises to the cell membrane. In Streptococcus pyogenes serotype M6 (strain ATCC BAA-946 / MGAS10394), this protein is Putative sugar uptake protein M6_Spy1874.